The chain runs to 62 residues: Small ribosomal subunit protein bS21C (62 aa).

Residues 43–62 (EKSKRKKLALHKQSKRRFRT) are disordered. Positions 45–62 (SKRKKLALHKQSKRRFRT) are enriched in basic residues.

This sequence belongs to the bacterial ribosomal protein bS21 family.

The protein is Small ribosomal subunit protein bS21C of Trichormus variabilis (strain ATCC 29413 / PCC 7937) (Anabaena variabilis).